The chain runs to 247 residues: Neurotrophic factor BDNF precursor form (247 aa).

Residues M1–A18 form the signal peptide. A propeptide spanning residues A19–R128 is cleaved from the precursor. N121 carries an N-linked (GlcNAc...) asparagine glycan. Disulfide bonds link C141–C208, C186–C237, and C196–C239.

The protein belongs to the NGF-beta family. Monomers and homodimers. Binds to NTRK2/TRKB. Can form heterodimers with other neurotrophin family members, such as NTF3 and NTF4 (in vitro), but the physiological relevance of this is not clear. BDNF precursor form: interacts with the heterodimer formed by NGFR and SORCS2. Mature BDNF has much lower affinity for the heterodimer formed by NGFR and SORCS2. Post-translationally, N-glycosylated and glycosulfated, contrary to mature BDNF. Mature BDNF is produced by proteolytic removal of the propeptide, catalyzed by a FURIN family member. In addition, the precursor form is proteolytically cleaved within the propeptide, but this is not an obligatory intermediate for the production of mature BDNF. Can be converted into mature BDNF by plasmin (PLG).

It localises to the secreted. In terms of biological role, important signaling molecule that activates signaling cascades downstream of NTRK2. During development, promotes the survival and differentiation of selected neuronal populations of the peripheral and central nervous systems. Participates in axonal growth, pathfinding and in the modulation of dendritic growth and morphology. Major regulator of synaptic transmission and plasticity at adult synapses in many regions of the CNS. The versatility of BDNF is emphasized by its contribution to a range of adaptive neuronal responses including long-term potentiation (LTP), long-term depression (LTD), certain forms of short-term synaptic plasticity, as well as homeostatic regulation of intrinsic neuronal excitability. Its function is as follows. Important signaling molecule that activates signaling cascades downstream of NTRK2. Activates signaling cascades via the heterodimeric receptor formed by NGFR and SORCS2. Signaling via NGFR and SORCS2 plays a role in synaptic plasticity and long-term depression (LTD). Binding to NGFR and SORCS2 promotes neuronal apoptosis. Promotes neuronal growth cone collapse. The protein is Neurotrophic factor BDNF precursor form (BDNF) of Felis catus (Cat).